The sequence spans 308 residues: MSGRVEVENIPGQVANLLKNVTAGDLLNVASSPAFLVAAAAIVIAAAFYSKVFNSTRPKPLDPSIWKEFPLQKKNQVSPNTAIYTFKLPHAEDVLGLPIGQHISVSADINGKNIVRSYTPISRQNARGRFELIIKTYEKGNISRHVASLKIGDTLRVKGPKGNFKYTPGLTAHLGMIAGGTGLAPMIQIVRAILQNPPDRTNITLIYANVNEEDILLRAELDALAMGYESRFNLFYVLNNPPSGWTGGVGFVTKEHIKDLLPNPNESNSKILICGPPPMVTAMKKNLEEIKYPVPNTISKLDDKVFVF.

Residues 29-49 (VASSPAFLVAAAAIVIAAAFY) traverse the membrane as a helical segment. An FAD-binding FR-type domain is found at 64-167 (SIWKEFPLQK…KGPKGNFKYT (104 aa)). Residues 147–162 (ASLK…GPKG) and 173–205 (HLGM…NITL) contribute to the FAD site.

The protein belongs to the flavoprotein pyridine nucleotide cytochrome reductase family. Monomer. Component of the 2-(3-amino-3-carboxypropyl)histidine synthase complex composed of DPH1, DPH2, DPH3 and a NADH-dependent reductase, predominantly MCR1.1. FAD serves as cofactor.

Its subcellular location is the mitochondrion outer membrane. It catalyses the reaction 2 Fe(III)-[cytochrome b5] + NADH = 2 Fe(II)-[cytochrome b5] + NAD(+) + H(+). It carries out the reaction 2 Fe(3+)-[Dph3] + NADH = 2 Fe(2+)-[Dph3] + NAD(+) + H(+). It functions in the pathway protein modification; peptidyl-diphthamide biosynthesis. Its function is as follows. NADH-dependent reductase for DPH3 and cytochrome b5. Required for the first step of diphthamide biosynthesis, a post-translational modification of histidine which occurs in elongation factor 2. DPH1 and DPH2 transfer a 3-amino-3-carboxypropyl (ACP) group from S-adenosyl-L-methionine (SAM) to a histidine residue, the reaction is assisted by a reduction system comprising DPH3 and a NADH-dependent reductase, predominantly MCR1.1. By reducing DPH3, also involved in the formation of the tRNA wobble base modification mcm5s 2U (5-methoxycarbonylmethyl-2-thiouridine), mediated by the elongator complex. The cytochrome b5/NADH cytochrome b5 reductase electron transfer system supports the catalytic activity of several sterol biosynthetic enzymes. The polypeptide is NADH-cytochrome b5 reductase 1 (MCR1.1) (Laccaria bicolor (strain S238N-H82 / ATCC MYA-4686) (Bicoloured deceiver)).